Reading from the N-terminus, the 241-residue chain is Small ribosomal subunit protein uS2 (241 aa).

This sequence belongs to the universal ribosomal protein uS2 family.

The sequence is that of Small ribosomal subunit protein uS2 from Cronobacter sakazakii (strain ATCC BAA-894) (Enterobacter sakazakii).